A 211-amino-acid polypeptide reads, in one-letter code: Regulator of G-protein signaling 2 (211 aa).

2 disordered regions span residues 14–33 and 49–68; these read RPMDKSAGSGHKSEEKREKM and LQNSSTPGKPKTGKKSKQQA. The interval 32–66 is necessary for membrane association; the sequence is KMKRTLLKDWKTRLSYFLQNSSTPGKPKTGKKSKQ. The tract at residues 79 to 116 is necessary to inhibit protein synthesis; the sequence is LWSEAFDELLASKYGLAAFRAFLKSEFCEENIEFWLAC. Residues 83–199 form the RGS domain; it reads AFDELLASKY…LESEFYQDLC (117 aa).

In terms of assembly, interacts with GNAQ. Does not interact with GNAI1 and GNAI3. Interacts with EIF2B5. Interacts with PRKG1 (isoform alpha). Phosphorylated by protein kinase C. Phosphorylation by PRKG1 leads to activation of RGS2 activity. Expressed in acute myelogenous leukemia (AML) and in acute lymphoblastic leukemia (ALL).

It is found in the cell membrane. The protein resides in the cytoplasm. The protein localises to the nucleus. Its subcellular location is the nucleolus. It localises to the mitochondrion. Regulates G protein-coupled receptor signaling cascades. Inhibits signal transduction by increasing the GTPase activity of G protein alpha subunits, thereby driving them into their inactive GDP-bound form. It is involved in the negative regulation of the angiotensin-activated signaling pathway. Plays a role in the regulation of blood pressure in response to signaling via G protein-coupled receptors and GNAQ. Plays a role in regulating the constriction and relaxation of vascular smooth muscle. Binds EIF2B5 and blocks its activity, thereby inhibiting the translation of mRNA into protein. The polypeptide is Regulator of G-protein signaling 2 (RGS2) (Homo sapiens (Human)).